Reading from the N-terminus, the 432-residue chain is Adenylosuccinate synthetase (432 aa).

GTP-binding positions include 13–19 (GDEGKGK) and 41–43 (GHT). Aspartate 14 (proton acceptor) is an active-site residue. 2 residues coordinate Mg(2+): aspartate 14 and glycine 41. IMP-binding positions include 14–17 (DEGK), 39–42 (NAGH), threonine 130, arginine 144, glutamine 225, threonine 240, and arginine 304. Catalysis depends on histidine 42, which acts as the Proton donor. Residue 300 to 306 (AVTGRPR) coordinates substrate. GTP-binding positions include arginine 306, 332 to 334 (KLD), and 415 to 417 (STG).

The protein belongs to the adenylosuccinate synthetase family. As to quaternary structure, homodimer. It depends on Mg(2+) as a cofactor.

The protein localises to the cytoplasm. The enzyme catalyses IMP + L-aspartate + GTP = N(6)-(1,2-dicarboxyethyl)-AMP + GDP + phosphate + 2 H(+). The protein operates within purine metabolism; AMP biosynthesis via de novo pathway; AMP from IMP: step 1/2. Its function is as follows. Plays an important role in the de novo pathway of purine nucleotide biosynthesis. Catalyzes the first committed step in the biosynthesis of AMP from IMP. In Glaesserella parasuis serovar 5 (strain SH0165) (Haemophilus parasuis), this protein is Adenylosuccinate synthetase.